The chain runs to 440 residues: Xylose isomerase (440 aa).

Catalysis depends on residues H101 and D104. Mg(2+) contacts are provided by E232, E268, H271, D296, D307, D309, and D339.

This sequence belongs to the xylose isomerase family. As to quaternary structure, homotetramer. Mg(2+) serves as cofactor.

The protein localises to the cytoplasm. It catalyses the reaction alpha-D-xylose = alpha-D-xylulofuranose. This is Xylose isomerase from Escherichia coli O17:K52:H18 (strain UMN026 / ExPEC).